The chain runs to 715 residues: Methylcrotonoyl-CoA carboxylase subunit alpha, mitochondrial (715 aa).

Residues 1 to 38 constitute a mitochondrion transit peptide; the sequence is MAAAALLAAVDRNQLRRVPILLLQPREWPWKHRTVKYG. The region spanning 45–490 is the Biotin carboxylation domain; the sequence is ITKVLIANRG…HTDFIPQHHK (446 aa). Residue K159 participates in ATP binding. One can recognise an ATP-grasp domain in the interval 163 to 360; sequence KSIMAAAGVP…LVEWQLRIAA (198 aa). K193 bears the N6-acetyllysine mark. ATP contacts are provided by residues K201 and 207–208; that span reads GG. K233 is modified (N6-acetyllysine). Residues H251, H278, and E318 each contribute to the ATP site. Residue R335 is part of the active site. K490 is subject to N6-acetyllysine. Position 577 is an N6-acetyllysine; alternate (K577). An N6-succinyllysine; alternate modification is found at K577. A Biotinyl-binding domain is found at 622 to 711; the sequence is SIEVGIPVPK…NRHAPLVEFE (90 aa). An N6-biotinyllysine modification is found at K677.

As to quaternary structure, probably a dodecamer composed of six biotin-containing alpha subunits (MCCC1) and six beta (MCCC2) subunits. Interacts (via the biotin carboxylation domain) with SIRT4. Biotin serves as cofactor. Acetylated.

It localises to the mitochondrion matrix. It catalyses the reaction 3-methylbut-2-enoyl-CoA + hydrogencarbonate + ATP = 3-methyl-(2E)-glutaconyl-CoA + ADP + phosphate + H(+). It functions in the pathway amino-acid degradation; L-leucine degradation; (S)-3-hydroxy-3-methylglutaryl-CoA from 3-isovaleryl-CoA: step 2/3. Its function is as follows. Biotin-attachment subunit of the 3-methylcrotonyl-CoA carboxylase, an enzyme that catalyzes the conversion of 3-methylcrotonyl-CoA to 3-methylglutaconyl-CoA, a critical step for leucine and isovaleric acid catabolism. In Rattus norvegicus (Rat), this protein is Methylcrotonoyl-CoA carboxylase subunit alpha, mitochondrial.